The chain runs to 479 residues: D-aminoacyl-tRNA deacylase (479 aa).

It belongs to the DtdA deacylase family. Monomer. Requires Zn(2+) as cofactor.

It catalyses the reaction a D-aminoacyl-tRNA + H2O = a tRNA + a D-alpha-amino acid + H(+). The catalysed reaction is glycyl-tRNA(Ala) + H2O = tRNA(Ala) + glycine + H(+). Its function is as follows. D-aminoacyl-tRNA deacylase with broad substrate specificity. By recycling D-aminoacyl-tRNA to D-amino acids and free tRNA molecules, this enzyme counteracts the toxicity associated with the formation of D-aminoacyl-tRNA entities in vivo. The polypeptide is D-aminoacyl-tRNA deacylase (Methanococcoides burtonii (strain DSM 6242 / NBRC 107633 / OCM 468 / ACE-M)).